Here is a 555-residue protein sequence, read N- to C-terminus: MMNHQFSSLERDRMLTDMTKKTYDLFIIGGGITGAGTALDAASRGMKVALSEMQDFAAGTSSRSTKLVHGGLRYLKQFEVKMVAEVGKERAIVYENGPHVTTPEWMLLPFHKGGTFGSFTTSIGLRVYDFLAGVKKSERRSMLSAKETLQKEPLVKKDGLKGGGYYVEYRTDDARLTIEVMKEAVKFGAEPVNYSKVKELLYEKGKAVGVLIEDVLTKKEYKVYAKKIVNATGPWVDQLREKDHSKNGKHLQHTKGIHLVFDQSVFPLKQAVYFDTPDGRMVFAIPREGKTYVGTTDTVYKEALEHPRMTTEDRDYVIKSINYMFPELNITANDIESSWAGLRPLIHEEGKDPSEISRKDEIWTSDSGLITIAGGKLTGYRKMAEHIVDLVRDRLKEEGEKDFGPCKTKNMPISGGHVGGSKNLMSFVTAKTKEGIAAGLSEKDAKQLAIRYGSNVDRVFDRVEALKDEAAKRNIPVHILAEAEYSIEEEMTATPADFFVRRTGRLFFDINWVRTYKDAVIDFMSERFQWDEQAKNKHTENLNKLLHDAVVPLEQ.

24–52 (DLFIIGGGITGAGTALDAASRGMKVALSE) contacts FAD.

The protein belongs to the FAD-dependent glycerol-3-phosphate dehydrogenase family. It depends on FAD as a cofactor.

Its subcellular location is the cytoplasm. It carries out the reaction a quinone + sn-glycerol 3-phosphate = dihydroxyacetone phosphate + a quinol. The protein operates within polyol metabolism; glycerol degradation via glycerol kinase pathway; glycerone phosphate from sn-glycerol 3-phosphate (aerobic route): step 1/1. The sequence is that of Aerobic glycerol-3-phosphate dehydrogenase (glpD) from Bacillus subtilis (strain 168).